A 1476-amino-acid chain; its full sequence is Cystic fibrosis transmembrane conductance regulator (1476 aa).

The Cytoplasmic portion of the chain corresponds to 1-77; that stretch reads MQKSPLEKAS…QLIHALRRCF (77 aa). Residues 78-98 form a helical membrane-spanning segment; sequence FWRFLFYGILLYLGEVTKAVQ. Residues 81 to 365 form the ABC transmembrane type-1 1 domain; sequence FLFYGILLYL…TAVQIWYDSF (285 aa). Residues 99-122 are Extracellular-facing; the sequence is PVLLGRIIASYDPENKVERSIAIY. Residues 123–146 traverse the membrane as a helical segment; the sequence is LGIGLCLLFIVRTLLLHPAIFGLH. Topologically, residues 147–195 are cytoplasmic; that stretch reads RIGMQMRTAMFSLIYKKTLKLSSRVLDKISIGQLVSLLSNNLNKFDEGL. Residues 196 to 216 traverse the membrane as a helical segment; sequence ALAHFIWIAPLQVTLLMGLLW. Residues 217–222 lie on the Extracellular side of the membrane; that stretch reads DLLQFS. A helical transmembrane segment spans residues 223–243; the sequence is AFCGLGLLIILVIFQAILGKM. At 244 to 298 the chain is on the cytoplasmic side; that stretch reads MVKYRDQRAAKINERLVITSEIIDNIYSVKAYCWESAMEKMIENLREVELKMTRK. Residues 299-319 traverse the membrane as a helical segment; that stretch reads AAYMRFFTSSAFFFSGFFVVF. At 320–339 the chain is on the extracellular side; the sequence is LSVLPYTVINGIVLRKIFTT. The chain crosses the membrane as a helical span at residues 340–358; it reads ISFCIVLRMSVTRQFPTAV. Topologically, residues 359 to 853 are cytoplasmic; the sequence is QIWYDSFGMI…YLRYFTLHKG (495 aa). ATP-binding positions include W401, 458-465, and Q493; that span reads GSTGSGKT. Positions 423–646 constitute an ABC transporter 1 domain; sequence SDENNVSFSH…RPDFSSKLMG (224 aa). C524 carries the S-palmitoyl cysteine lipid modification. Residues S549 and S660 each carry the phosphoserine modification. Residues 654–826 form a disordered R region region; the sequence is TEERRSSILT…EEINEEDLKE (173 aa). Position 670 is a phosphoserine; by PKA (S670). 3 positions are modified to phosphoserine: S684, S698, and S710. At T715 the chain carries Phosphothreonine. Phosphoserine occurs at positions 732, 763, 785, 790, and 808. A helical membrane pass occupies residues 854 to 874; that stretch reads LLLVLIWCVLVFLVEVAASLF. The ABC transmembrane type-1 2 domain occupies 854 to 1153; it reads LLLVLIWCVL…SSIDTDSLMR (300 aa). Over 875-913 the chain is Extracellular; the sequence is VLWLLKNNPVNSGNNGTKISNSSYVVIITSTSFYYIFYI. Residues N889 and N895 are each glycosylated (N-linked (GlcNAc...) asparagine). A discontinuously helical membrane pass occupies residues 914 to 934; that stretch reads YVGVADTLLALSLFRGLPLVH. Residues 935-985 are Cytoplasmic-facing; that stretch reads TLITASKILHRKMLHSILHAPMSTISKLKAGGILNRFSKDIAILDDFLPLT. The helical transmembrane segment at 986–1006 threads the bilayer; that stretch reads IFDFIQLVFIVIGAIIVVSAL. At 1007–1008 the chain is on the extracellular side; that stretch reads QP. The helical transmembrane segment at 1009–1029 threads the bilayer; the sequence is YIFLATVPGLVVFILLRAYFL. Residues 1030 to 1090 lie on the Cytoplasmic side of the membrane; it reads HTAQQLKQLE…TANWFMYLAT (61 aa). Residues 1091 to 1111 form a helical membrane-spanning segment; it reads LRWFQMRIDMIFVLFFIVVTF. The Extracellular segment spans residues 1112 to 1125; the sequence is ISILTTGEGEGTAG. Residues 1126 to 1146 traverse the membrane as a helical segment; sequence IILTLAMNIMSTLQWAVNSSI. Residues 1147-1476 lie on the Cytoplasmic side of the membrane; that stretch reads DTDSLMRSVS…TEEEVQETRL (330 aa). Residues 1208 to 1439 form the ABC transporter 2 domain; that stretch reads VKDLTVKYMD…KSIFQQAISS (232 aa). Residues Y1215 and 1240-1247 contribute to the ATP site; that span reads GRTGSGKS. Positions 1382-1476 are interaction with GORASP2; it reads RVLKQAFAGC…TEEEVQETRL (95 aa). The S-palmitoyl cysteine moiety is linked to residue C1391. A phosphoserine mark is found at S1440 and S1452. Positions 1446–1476 are disordered; the sequence is FQGRHSSKHKPRTQITALKEETEEEVQETRL. The segment covering 1466–1476 has biased composition (acidic residues); that stretch reads ETEEEVQETRL. Residues 1474–1476 carry the PDZ-binding motif; that stretch reads TRL.

This sequence belongs to the ABC transporter superfamily. ABCC family. CFTR transporter (TC 3.A.1.202) subfamily. In terms of assembly, monomer; does not require oligomerization for channel activity. May form oligomers in the membrane. Interacts with SLC26A3, SLC26A6 and NHERF1. Interacts with SHANK2. Interacts with MYO6. Interacts (via C-terminus) with GOPC (via PDZ domain); this promotes CFTR internalization and thereby decreases channel activity. Interacts with SLC4A7 through NHERF1. Found in a complex with MYO5B and RAB11A. Interacts with ANO1. Interacts with SLC26A8. Interacts with AHCYL1; the interaction increases CFTR activity. Interacts with CSE1L. The core-glycosylated form interacts with GORASP2 (via PDZ GRASP-type 1 domain) in respone to ER stress. Interacts with MARCHF2; the interaction leads to CFTR ubiqtuitination and degradation. Interacts with ADGRG2. Post-translationally, N-glycosylated. In terms of processing, phosphorylated; cAMP treatment promotes phosphorylation and activates the channel. Dephosphorylation decreases the ATPase activity (in vitro). Phosphorylation at PKA sites activates the channel. Phosphorylation at PKC sites enhances the response to phosphorylation by PKA. Phosphorylated by AMPK; this inhibits channel activity. Ubiquitinated, leading to its degradation in the lysosome. Deubiquitination by USP10 in early endosomes enhances its endocytic recycling to the cell membrane. Ubiquitinated by RNF185 during ER stress. Ubiquitinated by MARCHF2. In terms of tissue distribution, expressed in the epididymis (at protein level). In the initial segment of the epididymis, detected on both the luminal and basolateral sides of the ducts where it is expressed in the duct columnar cells as well as in the interstitial smooth muscle cells. Expressed in sperm in the caput. In the cauda, detected along the luminal border but not continuously and is also expressed on the basolateral surface. Within the caudal lumen, detected on sperm. Isoform 1: Expressed in a variety of epithelial tissues including colon, kidney, lung, small intestine, pancreatic duct and testis. Isoform 2: Expressed only in testis. Isoform 3: Expressed only in testis.

The protein resides in the apical cell membrane. Its subcellular location is the early endosome membrane. It localises to the cell membrane. It is found in the recycling endosome membrane. The protein localises to the endoplasmic reticulum membrane. The protein resides in the nucleus. The catalysed reaction is ATP + H2O + closed Cl(-) channel = ADP + phosphate + open Cl(-) channel.. It catalyses the reaction chloride(in) = chloride(out). It carries out the reaction hydrogencarbonate(in) = hydrogencarbonate(out). The enzyme catalyses ATP + H2O = ADP + phosphate + H(+). Functionally, epithelial ion channel that plays an important role in the regulation of epithelial ion and water transport and fluid homeostasis. Mediates the transport of chloride ions across the cell membrane. Possesses an intrinsic ATPase activity and utilizes ATP to gate its channel; the passive flow of anions through the channel is gated by cycles of ATP binding and hydrolysis by the ATP-binding domains. The ion channel is also permeable to HCO(3)(-); selectivity depends on the extracellular chloride concentration. Exerts its function also by modulating the activity of other ion channels and transporters. Contributes to the regulation of the pH and the ion content of the epithelial fluid layer. Modulates the activity of the epithelial sodium channel (ENaC) complex, in part by regulating the cell surface expression of the ENaC complex. May regulate bicarbonate secretion and salvage in epithelial cells by regulating the transporter SLC4A7. Can inhibit the chloride channel activity of ANO1. Plays a role in the chloride and bicarbonate homeostasis during sperm epididymal maturation and capacitation. The polypeptide is Cystic fibrosis transmembrane conductance regulator (Mus musculus (Mouse)).